The chain runs to 709 residues: NAD(P)H-quinone oxidoreductase subunit 5, chloroplastic (709 aa).

Helical transmembrane passes span 9–29, 40–60, 89–109, 125–145, 147–167, 219–239, 257–277, 280–300, 327–347, 354–374, 396–416, 425–445, 540–560, and 594–614; these read WIIP…LLLF, WAFP…DLSI, IDSL…FVLI, FAYM…SNLI, IYXF…FWFT, NEVH…GAVA, PTPI…IFLV, LLPL…IGII, LGYM…FHLI, ALLF…VGYS, IAFL…CFWS, WLYS…TASY, LFPM…AIPF, and FLTN…TAFL.

This sequence belongs to the complex I subunit 5 family. NDH is composed of at least 16 different subunits, 5 of which are encoded in the nucleus.

It is found in the plastid. The protein resides in the chloroplast thylakoid membrane. It carries out the reaction a plastoquinone + NADH + (n+1) H(+)(in) = a plastoquinol + NAD(+) + n H(+)(out). It catalyses the reaction a plastoquinone + NADPH + (n+1) H(+)(in) = a plastoquinol + NADP(+) + n H(+)(out). In terms of biological role, NDH shuttles electrons from NAD(P)H:plastoquinone, via FMN and iron-sulfur (Fe-S) centers, to quinones in the photosynthetic chain and possibly in a chloroplast respiratory chain. The immediate electron acceptor for the enzyme in this species is believed to be plastoquinone. Couples the redox reaction to proton translocation, and thus conserves the redox energy in a proton gradient. The sequence is that of NAD(P)H-quinone oxidoreductase subunit 5, chloroplastic (ndhF) from Pachira aquatica (Guiana chestnut).